We begin with the raw amino-acid sequence, 428 residues long: Tryptophan synthase beta chain (428 aa).

K92 is modified (N6-(pyridoxal phosphate)lysine).

It belongs to the TrpB family. In terms of assembly, tetramer of two alpha and two beta chains. Pyridoxal 5'-phosphate is required as a cofactor.

It carries out the reaction (1S,2R)-1-C-(indol-3-yl)glycerol 3-phosphate + L-serine = D-glyceraldehyde 3-phosphate + L-tryptophan + H2O. The protein operates within amino-acid biosynthesis; L-tryptophan biosynthesis; L-tryptophan from chorismate: step 5/5. Its function is as follows. The beta subunit is responsible for the synthesis of L-tryptophan from indole and L-serine. The sequence is that of Tryptophan synthase beta chain from Leptothrix cholodnii (strain ATCC 51168 / LMG 8142 / SP-6) (Leptothrix discophora (strain SP-6)).